The chain runs to 446 residues: MRTLNTSTMDGTGLVVERDFSFRILTACFLSLLILSTLLGNTLVCAAVIRFRHLRSKVTNFFVISLAVSDLLVAVLVMPWKAVAEIAGFWPFGSFCNIWVAFDIMCSTASILNLCVISVDRYWAISSPFRYERKMTPKAAFILISVAWTLSVLISFIPVQLSWHKAKPTSPSDGNVTSLGKTTHNCDSSLSRTYAISSSLISFYIPVAIMIVTYTRIYRIAQKQIRRISALERAAVHAKNCQTTAGNGNPAECSQPESSFKMSFKRETKVLKTLSVIMGVFVCCWLPFFILNCMVPFCGSGETKPFCIDSITFDVFVWFGWANSSLNPIIYAFNADFRKAFSTLLGCYRLCPTSTNAIETVSINNNGAVVFSSHHEPRGSISKDCNLVYLIPHAVGSSEDLKKEEAGGIASPLEKLSPALSVILDYDTDVSLEKIQPITQNGQHPT.

Topologically, residues 1 to 23 are extracellular; it reads MRTLNTSTMDGTGLVVERDFSFR. Residue asparagine 5 is glycosylated (N-linked (GlcNAc...) asparagine). A helical membrane pass occupies residues 24 to 49; the sequence is ILTACFLSLLILSTLLGNTLVCAAVI. The Cytoplasmic segment spans residues 50–60; it reads RFRHLRSKVTN. The chain crosses the membrane as a helical span at residues 61–87; it reads FFVISLAVSDLLVAVLVMPWKAVAEIA. Over 88–96 the chain is Extracellular; sequence GFWPFGSFC. Cysteines 96 and 186 form a disulfide. Residues 97-119 form a helical membrane-spanning segment; sequence NIWVAFDIMCSTASILNLCVISV. Residues 120–138 lie on the Cytoplasmic side of the membrane; sequence DRYWAISSPFRYERKMTPK. Residues 139-163 form a helical membrane-spanning segment; that stretch reads AAFILISVAWTLSVLISFIPVQLSW. Residues 164 to 192 lie on the Extracellular side of the membrane; the sequence is HKAKPTSPSDGNVTSLGKTTHNCDSSLSR. Residues 193-218 traverse the membrane as a helical segment; it reads TYAISSSLISFYIPVAIMIVTYTRIY. Over 219–272 the chain is Cytoplasmic; it reads RIAQKQIRRISALERAAVHAKNCQTTAGNGNPAECSQPESSFKMSFKRETKVLK. The helical transmembrane segment at 273-299 threads the bilayer; it reads TLSVIMGVFVCCWLPFFILNCMVPFCG. Residues 300–312 lie on the Extracellular side of the membrane; it reads SGETKPFCIDSIT. The chain crosses the membrane as a helical span at residues 313–337; the sequence is FDVFVWFGWANSSLNPIIYAFNADF. Topologically, residues 338–446 are cytoplasmic; that stretch reads RKAFSTLLGC…PITQNGQHPT (109 aa). S-palmitoyl cysteine attachment occurs at residues cysteine 347 and cysteine 351.

This sequence belongs to the G-protein coupled receptor 1 family. In terms of assembly, interacts with DNAJC14 via its C-terminus. Interacts with DRD2. Interacts with DORIP1.

It localises to the cell membrane. The protein localises to the endoplasmic reticulum membrane. It is found in the cell projection. The protein resides in the cilium membrane. Its subcellular location is the dendrite. It localises to the dendritic spine. In terms of biological role, dopamine receptor whose activity is mediated by G proteins which activate adenylyl cyclase. The polypeptide is D(1A) dopamine receptor (DRD1) (Sus scrofa (Pig)).